The primary structure comprises 201 residues: Large ribosomal subunit protein uL4 (201 aa).

Positions 45–71 (AQKTRAEVTGSGKKPWRQKGTGRARAG) are disordered.

The protein belongs to the universal ribosomal protein uL4 family. Part of the 50S ribosomal subunit.

In terms of biological role, one of the primary rRNA binding proteins, this protein initially binds near the 5'-end of the 23S rRNA. It is important during the early stages of 50S assembly. It makes multiple contacts with different domains of the 23S rRNA in the assembled 50S subunit and ribosome. Functionally, forms part of the polypeptide exit tunnel. The chain is Large ribosomal subunit protein uL4 from Shewanella sp. (strain MR-4).